The following is a 196-amino-acid chain: Small ribosomal subunit protein uS4c (196 aa).

Positions 17–36 (ALPGLTRKTPKSGSNLKKKF) are disordered. The region spanning 89–157 (MRLDNILFRL…VQNYIASSDP (69 aa)) is the S4 RNA-binding domain.

Belongs to the universal ribosomal protein uS4 family. As to quaternary structure, part of the 30S ribosomal subunit. Contacts protein S5. The interaction surface between S4 and S5 is involved in control of translational fidelity.

It localises to the plastid. The protein localises to the chloroplast. Its function is as follows. One of the primary rRNA binding proteins, it binds directly to 16S rRNA where it nucleates assembly of the body of the 30S subunit. In terms of biological role, with S5 and S12 plays an important role in translational accuracy. The protein is Small ribosomal subunit protein uS4c (rps4) of Calamagrostis epigeios (Wood small-reed grass).